The chain runs to 386 residues: Putative prophage major tail sheath protein (386 aa).

Belongs to the myoviridae tail sheath protein family.

It is found in the secreted. This is Putative prophage major tail sheath protein from Pseudomonas aeruginosa (strain UCBPP-PA14).